The primary structure comprises 225 residues: Ribosomal RNA small subunit methyltransferase G (225 aa).

S-adenosyl-L-methionine contacts are provided by residues G84, F89, 107 to 109 (DST), 135 to 136 (AE), and R154.

This sequence belongs to the methyltransferase superfamily. RNA methyltransferase RsmG family.

Its subcellular location is the cytoplasm. Functionally, specifically methylates the N7 position of a guanine in 16S rRNA. The polypeptide is Ribosomal RNA small subunit methyltransferase G (Microcystis aeruginosa (strain NIES-843 / IAM M-2473)).